A 172-amino-acid polypeptide reads, in one-letter code: Cytochrome b6-f complex iron-sulfur subunit (172 aa).

A helical membrane pass occupies residues 19–39 (LNALLSGSVGVVVVGALYPVV). The region spanning 61-161 (GKPISVSELL…ATVDGDNVRF (101 aa)) is the Rieske domain. Positions 107, 109, 125, and 128 each coordinate [2Fe-2S] cluster. A disulfide bond links Cys112 and Cys127.

This sequence belongs to the Rieske iron-sulfur protein family. As to quaternary structure, the 4 large subunits of the cytochrome b6-f complex are cytochrome b6, subunit IV (17 kDa polypeptide, PetD), cytochrome f and the Rieske protein, while the 4 small subunits are PetG, PetL, PetM and PetN. The complex functions as a dimer. It depends on [2Fe-2S] cluster as a cofactor.

Its subcellular location is the cellular thylakoid membrane. It carries out the reaction 2 oxidized [plastocyanin] + a plastoquinol + 2 H(+)(in) = 2 reduced [plastocyanin] + a plastoquinone + 4 H(+)(out). In terms of biological role, component of the cytochrome b6-f complex, which mediates electron transfer between photosystem II (PSII) and photosystem I (PSI), cyclic electron flow around PSI, and state transitions. The polypeptide is Cytochrome b6-f complex iron-sulfur subunit (Synechococcus sp. (strain JA-2-3B'a(2-13)) (Cyanobacteria bacterium Yellowstone B-Prime)).